A 364-amino-acid polypeptide reads, in one-letter code: Valine dehydrogenase (364 aa).

Residue K91 is part of the active site. 191-197 (GVGKVGH) contributes to the NAD(+) binding site.

It belongs to the Glu/Leu/Phe/Val dehydrogenases family. As to quaternary structure, homodimer.

Its subcellular location is the cytoplasm. The catalysed reaction is L-valine + NAD(+) + H2O = 3-methyl-2-oxobutanoate + NH4(+) + NADH + H(+). The protein operates within amino-acid degradation; L-valine degradation. Its activity is regulated as follows. Repressed in minimal medium by the presence of glucose and NH4(+), glycerol and NH4(+), or glycerol and asparagine. Functionally, oxidative deamination of branched-chain amino acids. Oxidizes L-valine and L-alpha-aminobutyric acid efficiently, and L-isoleucine and L-leucine less efficiently. Does not act on D-valine. The catabolism of L-valine is the major source of fatty acid precursors for macrolide biosynthesis and a vital source of antibiotic precursors. Uses NAD; no activity was found with NADP. This is Valine dehydrogenase (vdh) from Streptomyces coelicolor (strain ATCC BAA-471 / A3(2) / M145).